Consider the following 213-residue polypeptide: Dimethylamine corrinoid protein 1 (213 aa).

The B12-binding N-terminal domain maps to 1 to 90 (MSKEELLQEL…LMPEGSASSK (90 aa)). Residues 91–213 (MGVIVNGTVE…AVAKAKELLA (123 aa)) form the B12-binding domain. His104 contacts methylcob(III)alamin.

This sequence belongs to the methylamine corrinoid protein family.

It participates in one-carbon metabolism; methanogenesis from dimethylamine. In terms of biological role, acts as a methyl group carrier between MtbB and MtbA. In Methanosarcina acetivorans (strain ATCC 35395 / DSM 2834 / JCM 12185 / C2A), this protein is Dimethylamine corrinoid protein 1 (mtbC1).